Consider the following 164-residue polypeptide: MRLTSKGRYAVTAMLDVALHSQEGPVPLADISERQGISLSYLEQLFSRLRKNGLVSSVRGPGGGYLLGRDAGRIFVAEVISAVDESVDATRCQGKEGCQGGDRCLTHALWRDLSERITSFLGSISLEELVKNQEVLDVADRQDSDKRRTPNGRPQETINVNLRA.

The 130-residue stretch at 2-131 (RLTSKGRYAV…GSISLEELVK (130 aa)) folds into the HTH rrf2-type domain. A DNA-binding region (H-T-H motif) is located at residues 28 to 51 (LADISERQGISLSYLEQLFSRLRK). [2Fe-2S] cluster is bound by residues cysteine 92, cysteine 98, and cysteine 104. The disordered stretch occupies residues 140-164 (DRQDSDKRRTPNGRPQETINVNLRA). A compositionally biased stretch (polar residues) spans 152–164 (GRPQETINVNLRA).

[2Fe-2S] cluster is required as a cofactor.

Regulates the transcription of several operons and genes involved in the biogenesis of Fe-S clusters and Fe-S-containing proteins. This Xenorhabdus nematophila (strain ATCC 19061 / DSM 3370 / CCUG 14189 / LMG 1036 / NCIMB 9965 / AN6) protein is HTH-type transcriptional regulator IscR.